We begin with the raw amino-acid sequence, 346 residues long: Protein U59 (346 aa).

Belongs to the herpesviridae U59/UL88 family.

This chain is Protein U59, found in Elephantid herpesvirus 1 (isolate Asian elephant/Berlin/Kiba/1998) (EIHV-1).